Here is a 325-residue protein sequence, read N- to C-terminus: Probable transcription factor At4g01260 (325 aa).

The segment at 1–98 (MAPKQLKKIE…SMGEEDVKKK (98 aa)) is disordered. Low complexity-rich tracts occupy residues 23–32 (ASSGESATSG) and 49–69 (KPVV…ESST). The segment covering 73-83 (RSFEKTDEMSK) has biased composition (basic and acidic residues).

It belongs to the GeBP family.

The protein is Probable transcription factor At4g01260 of Arabidopsis thaliana (Mouse-ear cress).